Reading from the N-terminus, the 576-residue chain is Low-affinity glucose transporter HXT4 (576 aa).

A disordered region spans residues 1 to 56; that stretch reads MSEEAAYQEDTAVQNTPADALSPVESDSNSALSTPSNKAERDDMKDFDENHEESNN. Residues 1 to 66 lie on the Cytoplasmic side of the membrane; it reads MSEEAAYQED…YVEIPKKPAS (66 aa). Over residues 25 to 37 the composition is skewed to polar residues; the sequence is ESDSNSALSTPSN. The segment covering 38 to 54 has biased composition (basic and acidic residues); sequence KAERDDMKDFDENHEES. Residue Lys45 forms a Glycyl lysine isopeptide (Lys-Gly) (interchain with G-Cter in ubiquitin) linkage. The helical transmembrane segment at 67 to 87 threads the bilayer; the sequence is AYVTVSICCLMVAFGGFVFGW. Over 88-122 the chain is Extracellular; the sequence is DTGTISGFVAQTDFIRRFGMKHHDGTYYLSKVRTG. Residues 123–143 form a helical membrane-spanning segment; the sequence is LMVSIINIGCAIGGIILAKLG. Residues 144–149 are Cytoplasmic-facing; the sequence is DMYGRK. A helical transmembrane segment spans residues 150–170; the sequence is MGLIVVVVIYIIGIIIQIASI. Residues 171-180 are Extracellular-facing; the sequence is NKWYQYFIGR. A helical transmembrane segment spans residues 181–201; sequence IISGLGVGGIAVLSPMLISEV. At 202-207 the chain is on the cytoplasmic side; it reads SPKHIR. A helical membrane pass occupies residues 208–228; sequence GTLVSCYQLMITLGIFLGYCT. The Extracellular segment spans residues 229-242; it reads NYGTKTYTNSVQWR. Residues 243–263 traverse the membrane as a helical segment; it reads VPLGLGFAWALFMIGGMTFVP. Over 264–346 the chain is Cytoplasmic; it reads ESPRYLVEVG…IQSLQQLTGD (83 aa). The chain crosses the membrane as a helical span at residues 347-363; sequence NYFFYYGTTVFTAVGLS. Over 364 to 369 the chain is Extracellular; the sequence is DSFETS. A helical membrane pass occupies residues 370–387; sequence IVLGIVNFASTFVGIFLV. Over 388 to 394 the chain is Cytoplasmic; it reads ERYGRRR. Residues 395-415 form a helical membrane-spanning segment; the sequence is CLLWGAASMTACMVVFASVGV. Residues 416–437 are Extracellular-facing; sequence TRLWPNGKKNGSSKGAGNCMIV. The N-linked (GlcNAc...) asparagine glycan is linked to Asn425. The helical transmembrane segment at 438–458 threads the bilayer; the sequence is FTCFYLFCFATTWAPIPFVVN. Over 459 to 475 the chain is Cytoplasmic; it reads SETFPLRVKSKCMAIAQ. The helical transmembrane segment at 476–496 threads the bilayer; sequence ACNWIWGFLIGFFTPFISNAI. Position 497 (Asp497) is a topological domain, extracellular. Residues 498 to 518 form a helical membrane-spanning segment; sequence FYYGYVFMGCLVFSYFYVFFF. At 519–576 the chain is on the cytoplasmic side; it reads VPETKGLTLEEVNTLWEEGVLPWKSPSWVPPNKRGTDYNADDLMHDDQPFYKKMFGKK.

Belongs to the major facilitator superfamily. Sugar transporter (TC 2.A.1.1) family.

The protein localises to the cell membrane. Xylose uptake is strongly inhibited by glucose. Its function is as follows. Low-affinity glucose transporter. Can also transport xylose. This is Low-affinity glucose transporter HXT4 (HXT4) from Saccharomyces cerevisiae (strain JAY291) (Baker's yeast).